A 207-amino-acid polypeptide reads, in one-letter code: Large ribosomal subunit protein uL3 (207 aa).

A disordered region spans residues 119–143 (GFQGSIKRNGQHRGPMAHGSRYHRR).

This sequence belongs to the universal ribosomal protein uL3 family. In terms of assembly, part of the 50S ribosomal subunit. Forms a cluster with proteins L14 and L19.

One of the primary rRNA binding proteins, it binds directly near the 3'-end of the 23S rRNA, where it nucleates assembly of the 50S subunit. The sequence is that of Large ribosomal subunit protein uL3 from Ligilactobacillus salivarius (strain UCC118) (Lactobacillus salivarius).